The primary structure comprises 727 residues: 1,4-alpha-glucan branching enzyme GlgB (727 aa).

The Nucleophile role is filled by Asp405. Residue Glu458 is the Proton donor of the active site.

It belongs to the glycosyl hydrolase 13 family. GlgB subfamily. Monomer.

The enzyme catalyses Transfers a segment of a (1-&gt;4)-alpha-D-glucan chain to a primary hydroxy group in a similar glucan chain.. The protein operates within glycan biosynthesis; glycogen biosynthesis. Functionally, catalyzes the formation of the alpha-1,6-glucosidic linkages in glycogen by scission of a 1,4-alpha-linked oligosaccharide from growing alpha-1,4-glucan chains and the subsequent attachment of the oligosaccharide to the alpha-1,6 position. The sequence is that of 1,4-alpha-glucan branching enzyme GlgB from Yersinia pseudotuberculosis serotype O:1b (strain IP 31758).